The primary structure comprises 265 residues: Deoxyguanosine kinase, mitochondrial (265 aa).

32–40 (GNIAVGKST) is an ATP binding site. 4 residues coordinate substrate: E57, Y88, Q99, and R106. E129 (proton acceptor) is an active-site residue. Substrate-binding residues include R130 and D135. 190-194 (RLQRR) contributes to the ATP binding site. E199 contributes to the substrate binding site. Residue 242–244 (EDF) coordinates ATP.

The protein belongs to the DCK/DGK family. As to quaternary structure, homodimer.

The protein resides in the mitochondrion. The catalysed reaction is 2'-deoxyguanosine + ATP = dGMP + ADP + H(+). Its function is as follows. Phosphorylates deoxyguanosine in the mitochondrial matrix with high efficiency but shows very low activity against other deoxynucleosides. The polypeptide is Deoxyguanosine kinase, mitochondrial (Xenopus laevis (African clawed frog)).